Here is a 191-residue protein sequence, read N- to C-terminus: Phosphoheptose isomerase (191 aa).

An SIS domain is found at 37–191 (ITSSLKQGGK…LILLIEQSLL (155 aa)). 52–54 (NGG) is a substrate binding site. The Zn(2+) site is built by His61 and Glu65. Substrate is bound by residues Glu65, 93 to 94 (ND), 119 to 121 (STS), Ser124, and Gln172. The Zn(2+) site is built by Gln172 and His180.

The protein belongs to the SIS family. GmhA subfamily. It depends on Zn(2+) as a cofactor.

The protein localises to the cytoplasm. It carries out the reaction 2 D-sedoheptulose 7-phosphate = D-glycero-alpha-D-manno-heptose 7-phosphate + D-glycero-beta-D-manno-heptose 7-phosphate. The protein operates within carbohydrate biosynthesis; D-glycero-D-manno-heptose 7-phosphate biosynthesis; D-glycero-alpha-D-manno-heptose 7-phosphate and D-glycero-beta-D-manno-heptose 7-phosphate from sedoheptulose 7-phosphate: step 1/1. In terms of biological role, catalyzes the isomerization of sedoheptulose 7-phosphate in D-glycero-D-manno-heptose 7-phosphate. The protein is Phosphoheptose isomerase of Cytophaga hutchinsonii (strain ATCC 33406 / DSM 1761 / CIP 103989 / NBRC 15051 / NCIMB 9469 / D465).